A 436-amino-acid chain; its full sequence is Aminotransferase tdiD (436 aa).

Positions 30, 86, 148, and 202 each coordinate substrate. K270 is modified (N6-(pyridoxal phosphate)lysine). R407 is a substrate binding site.

This sequence belongs to the class-I pyridoxal-phosphate-dependent aminotransferase family. It depends on pyridoxal 5'-phosphate as a cofactor.

The catalysed reaction is 3-phenylpyruvate + L-tryptophan = indole-3-pyruvate + L-phenylalanine. It functions in the pathway secondary metabolite biosynthesis. Its function is as follows. Aminotransferase; part of the gene cluster that mediates the biosynthesis of terrequinone A, an antitumor agent. The first step in the biosynthetic pathway for terrequinone A is formation of indole pyruvic acid (IPA) from L-tryptophan by the aminotransferase tdiD. The nonribosomal peptide synthase tdiA then immediately converts unstable IPA to didemethylasterriquinone D (DDAQ D), via condensation of 2 IPA molecules. The symmetric connectivity of the 2 IPA molecules is thought to arise by head-to-tail dual Claisen condensations facilitated by the TE domain. TdiB then catalyzes reverse prenylation by transferring dimethylallyl diphosphate to carbon atom 2' of DDAQ D, to yield asterriquinone C-1. Finally, tdiC and tdiE enzymes robustly convert asterriquinone C-1 to terrequinone A via a transformation involving regular prenylation at carbon atom 5, which requires elimination of the hydroxy group on C-5. The protein is Aminotransferase tdiD of Emericella nidulans (strain FGSC A4 / ATCC 38163 / CBS 112.46 / NRRL 194 / M139) (Aspergillus nidulans).